The following is a 351-amino-acid chain: Tropomodulin-2 (351 aa).

Position 25 is a phosphoserine (Ser25).

It belongs to the tropomodulin family. In terms of assembly, binds to the N-terminus of tropomyosin and to actin. Binds to TMBr3 as well as to other low molecular mass tropomyosins (TM5a or TM5), but not to high molecular mass tropomyosins (TM2 or TMBr1). Neuronal-tissue specific.

It localises to the cytoplasm. The protein resides in the cytoskeleton. In terms of biological role, blocks the elongation and depolymerization of the actin filaments at the pointed end. The Tmod/TM complex contributes to the formation of the short actin protofilament, which in turn defines the geometry of the membrane skeleton. The chain is Tropomodulin-2 (Tmod2) from Rattus norvegicus (Rat).